We begin with the raw amino-acid sequence, 260 residues long: 5'-nucleotidase SurE (260 aa).

A divalent metal cation is bound by residues Asp8, Asp9, Ser43, and Asn96.

This sequence belongs to the SurE nucleotidase family. A divalent metal cation serves as cofactor.

The protein localises to the cytoplasm. The catalysed reaction is a ribonucleoside 5'-phosphate + H2O = a ribonucleoside + phosphate. Nucleotidase that shows phosphatase activity on nucleoside 5'-monophosphates. This is 5'-nucleotidase SurE from Ruegeria pomeroyi (strain ATCC 700808 / DSM 15171 / DSS-3) (Silicibacter pomeroyi).